The sequence spans 409 residues: Tyrosine--tRNA ligase (409 aa).

The 'HIGH' region motif lies at 54 to 63 (PTAPDIHLGH). The 'KMSKS' region signature appears at 238–242 (KMSKS). Residue Lys241 participates in ATP binding. The 61-residue stretch at 347–407 (MGILHVLRAS…GKRKFARVNL (61 aa)) folds into the S4 RNA-binding domain.

The protein belongs to the class-I aminoacyl-tRNA synthetase family. TyrS type 2 subfamily. In terms of assembly, homodimer.

It localises to the cytoplasm. The enzyme catalyses tRNA(Tyr) + L-tyrosine + ATP = L-tyrosyl-tRNA(Tyr) + AMP + diphosphate + H(+). Functionally, catalyzes the attachment of tyrosine to tRNA(Tyr) in a two-step reaction: tyrosine is first activated by ATP to form Tyr-AMP and then transferred to the acceptor end of tRNA(Tyr). This Bordetella avium (strain 197N) protein is Tyrosine--tRNA ligase.